A 456-amino-acid chain; its full sequence is MYVEDTIAAISTAAGEGGVGIVRVSGPDAPSIARRVFRRGSNGDFESHRFYYGSVVDAVTGEAVDEAMAVLMVRPRSYTREDVLEIQCHGGYLVTRRVLELVLAAGARLAEPGEFTRRAFLNGRIDLVQAEAVIDVIRAKTDAALALAQHQRQGRLSQRLDTVMAELRQALALVEAFIDFPEDDIDPAAQDALTVHVRKAAETVGELIAGFDEGRVLREGVAVLIAGKPNVGKSSLLNTLLQEKRAIVTSVPGTTRDIIEEVVNIRGLPLRMIDTAGIRDTEDIVEKEGVRLTLEKIPEADLVLLVIDGSRPLDEDDRMILSALAGKRLILVENKCDLPRAVQIPDELVLMPRVTVSTSRGDGIDELKESIFQTFIHGAAIDSREYVAVSRVRHRDLLSRSTMHLTAFEQGLASGFTLELLAVELRDALAAVGEVTGETTPDDILDVIFDRFCIGK.

3 residues coordinate (6S)-5-formyl-5,6,7,8-tetrahydrofolate: R23, E85, and R124. One can recognise a TrmE-type G domain in the interval 220–376; sequence GVAVLIAGKP…LKESIFQTFI (157 aa). K(+) is bound at residue N230. GTP contacts are provided by residues 230-235, 249-255, and 274-277; these read NVGKSS, TSVPGTT, and DTAG. S234 is a binding site for Mg(2+). The K(+) site is built by T249, V251, and T254. Residue T255 coordinates Mg(2+). Residue K456 participates in (6S)-5-formyl-5,6,7,8-tetrahydrofolate binding.

This sequence belongs to the TRAFAC class TrmE-Era-EngA-EngB-Septin-like GTPase superfamily. TrmE GTPase family. As to quaternary structure, homodimer. Heterotetramer of two MnmE and two MnmG subunits. It depends on K(+) as a cofactor.

The protein localises to the cytoplasm. Functionally, exhibits a very high intrinsic GTPase hydrolysis rate. Involved in the addition of a carboxymethylaminomethyl (cmnm) group at the wobble position (U34) of certain tRNAs, forming tRNA-cmnm(5)s(2)U34. The sequence is that of tRNA modification GTPase MnmE from Geobacter sulfurreducens (strain ATCC 51573 / DSM 12127 / PCA).